The primary structure comprises 38 residues: Photosystem II reaction center protein L (38 aa).

A helical membrane pass occupies residues 17-37 (SLYWGLLLIFVLAVLFSNYFF).

Belongs to the PsbL family. As to quaternary structure, PSII is composed of 1 copy each of membrane proteins PsbA, PsbB, PsbC, PsbD, PsbE, PsbF, PsbH, PsbI, PsbJ, PsbK, PsbL, PsbM, PsbT, PsbX, PsbY, PsbZ, Psb30/Ycf12, at least 3 peripheral proteins of the oxygen-evolving complex and a large number of cofactors. It forms dimeric complexes.

It is found in the plastid. The protein localises to the chloroplast thylakoid membrane. One of the components of the core complex of photosystem II (PSII). PSII is a light-driven water:plastoquinone oxidoreductase that uses light energy to abstract electrons from H(2)O, generating O(2) and a proton gradient subsequently used for ATP formation. It consists of a core antenna complex that captures photons, and an electron transfer chain that converts photonic excitation into a charge separation. This subunit is found at the monomer-monomer interface and is required for correct PSII assembly and/or dimerization. The sequence is that of Photosystem II reaction center protein L from Ananas comosus (Pineapple).